A 1129-amino-acid chain; its full sequence is Inositol hexakisphosphate and diphosphoinositol-pentakisphosphate kinase 2 (1129 aa).

Ser-44 carries the phosphoserine modification. 59 to 60 (KK) provides a ligand contact to substrate. Positions 140, 193, 200, and 219 each coordinate ATP. 219–220 (RK) lines the substrate pocket. Ser-229 is subject to Phosphoserine. ATP-binding positions include 243–246 (EEFM) and 252–254 (DVK). Substrate-binding residues include Lys-254 and Arg-268. Residues Ser-270, Asp-315, and 327 to 329 (DVN) each bind ATP. Residue 332 to 335 (SFVK) participates in substrate binding. The interval 377 to 448 (PTTSGTMMEL…VLDIARQLLM (72 aa)) is polyphosphoinositide-binding domain. Positions 904-945 (KGCEEDKNLPSGYGYRPASRENEGRRSLKTDDDEPHTSKRDE) are disordered. Residues 921-945 (ASRENEGRRSLKTDDDEPHTSKRDE) are compositionally biased toward basic and acidic residues. 3 positions are modified to phosphoserine: Ser-1051, Ser-1058, and Ser-1066. A disordered region spans residues 1070–1129 (YTPTKILPTPPAALKSSKASSKAAAGGPSQAMAPHTSSRKKSINSKTEGHEPKKSTGKKR). Low complexity predominate over residues 1081–1098 (AALKSSKASSKAAAGGPS). Phosphoserine is present on residues Ser-1106 and Ser-1107.

It belongs to the histidine acid phosphatase family. VIP1 subfamily. As to expression, ubiquitously expressed. Expressed in the cochlear and vestibular sensory hair cells, supporting cells and spiral ganglion neurons.

It is found in the cytoplasm. It localises to the cytosol. The catalysed reaction is 1D-myo-inositol hexakisphosphate + ATP = 1-diphospho-1D-myo-inositol 2,3,4,5,6-pentakisphosphate + ADP. It carries out the reaction 5-diphospho-1D-myo-inositol 1,2,3,4,6-pentakisphosphate + ATP + H(+) = 1,5-bis(diphospho)-1D-myo-inositol 2,3,4,6-tetrakisphosphate + ADP. Functionally, bifunctional inositol kinase that acts in concert with the IP6K kinases IP6K1, IP6K2 and IP6K3 to synthesize the diphosphate group-containing inositol pyrophosphates diphosphoinositol pentakisphosphate, PP-InsP5, and bis-diphosphoinositol tetrakisphosphate, (PP)2-InsP4. PP-InsP5 and (PP)2-InsP4, also respectively called InsP7 and InsP8, regulate a variety of cellular processes, including apoptosis, vesicle trafficking, cytoskeletal dynamics, exocytosis, insulin signaling and neutrophil activation. Phosphorylates inositol hexakisphosphate (InsP6) at position 1 to produce PP-InsP5 which is in turn phosphorylated by IP6Ks to produce (PP)2-InsP4. Alternatively, phosphorylates PP-InsP5 at position 1, produced by IP6Ks from InsP6, to produce (PP)2-InsP4. Required for normal hearing. This chain is Inositol hexakisphosphate and diphosphoinositol-pentakisphosphate kinase 2, found in Mus musculus (Mouse).